Here is a 308-residue protein sequence, read N- to C-terminus: MQQVAIIGSGNIGTDLLIKIKRRSESLSVAAMVGIDPESDGLARARRLGVATTSDGVAGLLAMPEFEQAGIVLDATSANAHRANAAALAPYGRRLIDLTPAALGPFVVPAVNLDEHLSAPNVNMTTCGGQATVPIVAAISRVTPVAYAEIVATVASKSAGPGTRANIDEFTETTAHALESVGGARRGKAIIILNPAEPPLIMRDTVLCLVGDVDRDAVTESIHRMIADVAAYVPGYRLKQDVQFTPVDPAEMRILLPDDTVDVRWKVSVFLEVEGAAHYLPAYAGNLDIMTSAAVRVAERIAGAEVTA.

9-12 is an NAD(+) binding site; it reads SGNI. Catalysis depends on Cys127, which acts as the Acyl-thioester intermediate. Residues 158–166 and Asn286 contribute to the NAD(+) site; that span reads SAGPGTRAN.

The protein belongs to the acetaldehyde dehydrogenase family.

The catalysed reaction is acetaldehyde + NAD(+) + CoA = acetyl-CoA + NADH + H(+). This Parafrankia sp. (strain EAN1pec) protein is Acetaldehyde dehydrogenase 2.